A 510-amino-acid chain; its full sequence is Hydroperoxide bicyclase CYP5164A3, mitochondrial (510 aa).

A mitochondrion-targeting transit peptide spans 1-31; the sequence is MQRVGAASPTCSSLQAPAAAPPILTISPHHR. Residue Cys-452 participates in heme binding.

Belongs to the cytochrome P450 family. Heme is required as a cofactor.

It is found in the mitochondrion. It catalyses the reaction (13S)-hydroperoxy-(9Z,11E,15Z)-octadecatrienoate = plasmodiophorol A. The catalysed reaction is (13S)-hydroperoxy-(9Z,11E,15Z)-octadecatrienoate = plasmodiophorol B. It carries out the reaction (13S)-hydroperoxy-(9Z,11E,15Z)-octadecatrienoate = ectocarpin A + H2O. The enzyme catalyses (15S)-hydroperoxy-(5Z,8Z,11Z,13E,17Z)-eicosapentaenoate = ectocarpin B + H2O. It catalyses the reaction (15S)-hydroperoxy-(5Z,8Z,11Z,13E,17Z)-eicosapentaenoate = ectocarpin C. The catalysed reaction is (15S)-hydroperoxy-(5Z,8Z,11Z,13E,17Z)-eicosapentaenoate + H2O = ectocarpin D. It carries out the reaction (15S)-hydroperoxy-(5Z,8Z,11Z,13E,17Z)-eicosapentaenoate = 14-oxo-15-hydroxy-(5Z,8Z,11Z,17Z)-eicosatetraenoate. It functions in the pathway lipid metabolism; oxylipin biosynthesis. Its function is as follows. Cytochrome P450 hydroperoxide bicyclase involved in the metabolism of oxylipins 'ectocarpins' natural products, such as hybridalactone, ecklonilactones and derivatives. Isomerizes the hydroperoxides into epoxyalcohols via epoxyallylic radical. Can use alpha-linolenic acid 13(S)-hydroperoxide (13-HPOTE) and eicosapentaenoic acid 15(S)-hydroperoxide (15-HPEPE) as preferred substrate to produce corresponding heterobicyclic oxylipins, such as plasmodiophorol A (6-oxabicyclo[3.1.0]hexane), plasmodiophorol B (2-oxabicyclo[2.2.1]heptane) and plasmodiophorol C (4-hydroxymethyl-1,2-dihydroxycyclopentane) as well as ectocarpin A (3-propenyl-6-oxabicyclo[3.1.0]hexane) formed at about 15:3:3:1 ratio for 13-HPOTE, and analogous to plasmodiophorols A and B including ectocarpin B (3-[(1'E)-propenyl]-6-oxabicyclo[3.1.0]hexane), ectocarpin C, 14-oxo-15-hydroxy-5,8,11,17-eicosate-traenoic acid and ectocarpin D for 15-HPEPE. Barely able to use linoleic acid 13-hydroperoxide (13-HPODE), linoleic acid 9-hydroperoxide (9-HPODE), eicosapentaenoic acid 15-hydroperoxide (15-HPEPE), and alpha-linolenic acid 9-hydroperoxide (9-HPOTE) as substrates. The chain is Hydroperoxide bicyclase CYP5164A3, mitochondrial from Ectocarpus siliculosus (Brown alga).